Here is a 558-residue protein sequence, read N- to C-terminus: Hepatocyte nuclear factor 1-beta (558 aa).

Positions 1 to 31 (MVSKLTSLQQELLSALLSSGVTKEVLIQALE) are dimerization. An HNF-p1 domain is found at 1–32 (MVSKLTSLQQELLSALLSSGVTKEVLIQALEE). Phosphoserine occurs at positions 49, 52, 75, and 80. A disordered region spans residues 66–85 (TNGHAKGRLSGDEGSEDGDD). The POU-specific atypical domain occupies 93-188 (KELQALNTEE…ILRQFNQTVQ (96 aa)). Positions 231 to 311 (MRRNRFKWGP…NRRKEEAFRQ (81 aa)) form a DNA-binding region, homeobox; HNF1-type. The segment at 323-348 (THNLNPLLTHGSPHHQPSSSPPNKMS) is disordered.

This sequence belongs to the HNF1 homeobox family. As to quaternary structure, binds DNA as a dimer. Can form homodimer or heterodimer with HNF1-alpha. Interacts (via HNF-p1 domain) with PCBD1; the interaction increases its transactivation activity.

It localises to the nucleus. Transcription factor that binds to the inverted palindrome 5'-GTTAATNATTAAC-3'. Binds to the FPC element in the cAMP regulatory unit of the PLAU gene. Transcriptional activity is increased by coactivator PCBD1. The protein is Hepatocyte nuclear factor 1-beta (Hnf1b) of Mus musculus (Mouse).